Reading from the N-terminus, the 164-residue chain is HTH-type transcriptional regulator IscR (164 aa).

The HTH rrf2-type domain maps to 2 to 131; sequence RLTSKGRYAV…NNITLGELVN (130 aa). The segment at residues 28–51 is a DNA-binding region (H-T-H motif); it reads LADISERQGISLSYLEQLFSRLRK. 3 residues coordinate [2Fe-2S] cluster: C92, C98, and C104.

[2Fe-2S] cluster is required as a cofactor.

Its function is as follows. Regulates the transcription of several operons and genes involved in the biogenesis of Fe-S clusters and Fe-S-containing proteins. In Salmonella agona (strain SL483), this protein is HTH-type transcriptional regulator IscR.